The sequence spans 887 residues: Exosome complex component 10 (887 aa).

The segment covering 1 to 10 (MAPPSPREHQ) has biased composition (basic and acidic residues). A disordered region spans residues 1–23 (MAPPSPREHQSAPATSATKPDAE). Residue lysine 19 forms a Glycyl lysine isopeptide (Lys-Gly) (interchain with G-Cter in SUMO2) linkage. The region spanning 289–455 (HLVSSLDELV…YIYDRMRLEL (167 aa)) is the 3'-5' exonuclease domain. Mg(2+)-binding residues include aspartate 313, glutamate 315, aspartate 371, and aspartate 440. An HRDC domain is found at 503–583 (NSQQLTAFQL…QQAREMPLLK (81 aa)). A Glycyl lysine isopeptide (Lys-Gly) (interchain with G-Cter in SUMO1); alternate cross-link involves residue lysine 583. Lysine 583 is covalently cross-linked (Glycyl lysine isopeptide (Lys-Gly) (interchain with G-Cter in SUMO2); alternate). Lysine 710 participates in a covalent cross-link: Glycyl lysine isopeptide (Lys-Gly) (interchain with G-Cter in SUMO2). Disordered regions lie at residues 734 to 757 (KEPKEATKKKVAEQTAAREEAKEE) and 777 to 887 (NATK…WPKR). The span at 778 to 796 (ATKKRERATSDLRTIEQKQ) shows a compositional bias: basic and acidic residues. Residue serine 823 is modified to Phosphoserine. Glycyl lysine isopeptide (Lys-Gly) (interchain with G-Cter in SUMO2) cross-links involve residues lysine 835, lysine 861, and lysine 875.

It belongs to the exosome component 10/RRP6 family. As to quaternary structure, component of the RNA exosome complex. The catalytically inactive RNA exosome core complex (Exo-9) associates with the catalytic subunit EXOSC10/RRP6 (via its N-terminus). Exo-9 may associate with DIS3 to form the nucleolar exosome complex, or DIS3L to form the cytoplasmic exosome complex. The RNA exosome complex interacts with cofactors C1D/RRP47, MPHOSPH6/MPP6 and MTREX/MTR4. Interacts with MTREX; the interaction with MTREX mediates the association of MTREX with nuclear RNA exosomes. Part of the small subunit (SSU) processome, composed of more than 70 proteins and the RNA chaperone small nucleolar RNA (snoRNA) U3. Interacts with ALYREF/THOC4. Interacts with DHX36; this interaction occurs in a RNase-insensitive manner. Interacts with NRDE2. Interacts (via C-terminus) with USP36 (via C-terminus); the interaction is facilitated by the association with RNA and promotes sumoylation of EXOSC10. Mg(2+) is required as a cofactor. Post-translationally, sumoylated by USP36; sumoylation does not significantly affect EXOSC10 nucleolar localization and association with core exosome and USP36, but regulates the nucleolar RNA exosome activity in rRNA processing by promoting binding of EXOSC10 to pre-rRNAs. Effects of sumoylation on EXOSC10 levels vary between different studies. Sumoylation of EXOSC10 is required for the modulation of EXOSC10 effects on cellular protein translation and cell proliferation. Sumoylation is promoted by mild hypothermia. In terms of tissue distribution, expressed in ovary (at protein level). Expressed in testis (at protein level). Expressed in lung (at protein level).

Its subcellular location is the cytoplasm. It localises to the nucleus. It is found in the nucleolus. The protein resides in the nucleoplasm. Its function is as follows. Catalytic component of the RNA exosome complex which has 3'-&gt;5' exoribonuclease activity and participates in a multitude of cellular RNA processing and degradation events. In the nucleus, the RNA exosome complex is involved in proper maturation of stable RNA species such as rRNA, snRNA and snoRNA, in the elimination of RNA processing by-products and non-coding 'pervasive' transcripts, such as antisense RNA species and promoter-upstream transcripts (PROMPTs), and of mRNAs with processing defects, thereby limiting or excluding their export to the cytoplasm. Part of the small subunit (SSU) processome, first precursor of the small eukaryotic ribosomal subunit. During the assembly of the SSU processome in the nucleolus, many ribosome biogenesis factors, an RNA chaperone and ribosomal proteins associate with the nascent pre-rRNA and work in concert to generate RNA folding, modifications, rearrangements and cleavage as well as targeted degradation of pre-ribosomal RNA by the RNA exosome. The RNA exosome may be involved in Ig class switch recombination (CSR) and/or Ig variable region somatic hypermutation (SHM) by targeting AICDA deamination activity to transcribed dsDNA substrates. In the cytoplasm, the RNA exosome complex is involved in general mRNA turnover and specifically degrades inherently unstable mRNAs containing AU-rich elements (AREs) within their 3' untranslated regions, and in RNA surveillance pathways, preventing translation of aberrant mRNAs. It seems to be involved in degradation of histone mRNA. EXOSC10 is required for nucleolar localization of C1D and probably mediates the association of MTREX, C1D and MPHOSPH6 with the RNA exosome involved in the maturation of 5.8S rRNA. Plays a role in the recruitment of replication protein A complex (RPA) and RAD51 to DNA double-strand breaks caused by irradiation, contributing to DNA repair by homologous recombination. Regulates levels of damage-induced RNAs in order to prevent DNA-RNA hybrid formation at DNA double-strand breaks and limit DNA end resection after damage. Plays a role in oocyte development, maturation and survival. Required for normal testis development and mitotic division of spermatogonia. Plays a role in proper embryo development. Required for global protein translation. Required for cell proliferation. The polypeptide is Exosome complex component 10 (Exosc10) (Mus musculus (Mouse)).